Consider the following 616-residue polypeptide: UvrABC system protein C (616 aa).

The 80-residue stretch at 21–100 (TCPGVYQFKN…IKDLKPRYNI (80 aa)) folds into the GIY-YIG domain. The 36-residue stretch at 214-249 (GALIRTLSAEMHRYADELRFEEAAELKIQIEGLRKY) folds into the UVR domain.

The protein belongs to the UvrC family. In terms of assembly, interacts with UvrB in an incision complex.

It is found in the cytoplasm. The UvrABC repair system catalyzes the recognition and processing of DNA lesions. UvrC both incises the 5' and 3' sides of the lesion. The N-terminal half is responsible for the 3' incision and the C-terminal half is responsible for the 5' incision. The polypeptide is UvrABC system protein C (Prosthecochloris aestuarii (strain DSM 271 / SK 413)).